Reading from the N-terminus, the 1433-residue chain is DNA-directed RNA polymerase subunit beta' (1433 aa).

Zn(2+)-binding residues include Cys-66, Cys-68, Cys-81, and Cys-84. Positions 473, 475, and 477 each coordinate Mg(2+). Zn(2+) contacts are provided by Cys-815, Cys-889, Cys-896, and Cys-899.

The protein belongs to the RNA polymerase beta' chain family. As to quaternary structure, the RNAP catalytic core consists of 2 alpha, 1 beta, 1 beta' and 1 omega subunit. When a sigma factor is associated with the core the holoenzyme is formed, which can initiate transcription. Requires Mg(2+) as cofactor. The cofactor is Zn(2+).

The catalysed reaction is RNA(n) + a ribonucleoside 5'-triphosphate = RNA(n+1) + diphosphate. DNA-dependent RNA polymerase catalyzes the transcription of DNA into RNA using the four ribonucleoside triphosphates as substrates. The polypeptide is DNA-directed RNA polymerase subunit beta' (Porphyromonas gingivalis (strain ATCC BAA-308 / W83)).